The sequence spans 173 residues: Inorganic pyrophosphatase (173 aa).

Substrate is bound by residues lysine 29, arginine 43, and tyrosine 55. Mg(2+)-binding residues include aspartate 65, aspartate 70, and aspartate 102. Tyrosine 141 contacts substrate.

Belongs to the PPase family. As to quaternary structure, homohexamer. The cofactor is Mg(2+).

It localises to the cytoplasm. It catalyses the reaction diphosphate + H2O = 2 phosphate + H(+). Its function is as follows. Catalyzes the hydrolysis of inorganic pyrophosphate (PPi) forming two phosphate ions. The sequence is that of Inorganic pyrophosphatase from Rickettsia conorii (strain ATCC VR-613 / Malish 7).